The following is a 313-amino-acid chain: Putative S-adenosyl-L-methionine-dependent methyltransferase MUL_0706 (313 aa).

S-adenosyl-L-methionine-binding positions include Asp-132 and 161-162 (DL).

The protein belongs to the UPF0677 family.

Its function is as follows. Exhibits S-adenosyl-L-methionine-dependent methyltransferase activity. This Mycobacterium ulcerans (strain Agy99) protein is Putative S-adenosyl-L-methionine-dependent methyltransferase MUL_0706.